Consider the following 362-residue polypeptide: Ribosome-binding ATPase YchF (362 aa).

The OBG-type G domain occupies 2–258 (LSAGIVGLPN…LDANGRQDWL (257 aa)). 11–16 (NVGKST) is an ATP binding site. Mg(2+) contacts are provided by S15 and T35. The TGS domain maps to 281 to 347 (GLWSFFTFGK…EAKKQGLVRL (67 aa)).

This sequence belongs to the TRAFAC class OBG-HflX-like GTPase superfamily. OBG GTPase family. YchF/OLA1 subfamily. Mg(2+) serves as cofactor.

In terms of biological role, ATPase that binds to both the 70S ribosome and the 50S ribosomal subunit in a nucleotide-independent manner. The chain is Ribosome-binding ATPase YchF from Mycoplasma pneumoniae (strain ATCC 29342 / M129 / Subtype 1) (Mycoplasmoides pneumoniae).